A 358-amino-acid polypeptide reads, in one-letter code: Photosystem II protein D1 (358 aa).

The next 3 membrane-spanning stretches (helical) occupy residues Y28–I45, H117–L132, and W141–A155. H117 serves as a coordination point for chlorophyll a. W125 serves as a coordination point for pheophytin a. 2 residues coordinate [CaMn4O5] cluster: D169 and E188. A helical membrane pass occupies residues F196–L217. Position 197 (H197) interacts with chlorophyll a. A quinone-binding positions include H214 and S263–F264. H214 is a binding site for Fe cation. Position 271 (H271) interacts with Fe cation. A helical membrane pass occupies residues F273 to L287. The [CaMn4O5] cluster site is built by H331, E332, D341, and A343. The propeptide occupies A344–G358.

This sequence belongs to the reaction center PufL/M/PsbA/D family. PSII is composed of 1 copy each of membrane proteins PsbA, PsbB, PsbC, PsbD, PsbE, PsbF, PsbH, PsbI, PsbJ, PsbK, PsbL, PsbM, PsbT, PsbX, PsbY, Psb30/Ycf12, peripheral proteins PsbO, CyanoQ (PsbQ), PsbU, PsbV and a large number of cofactors. It forms dimeric complexes. The D1/D2 heterodimer binds P680, chlorophylls that are the primary electron donor of PSII, and subsequent electron acceptors. It shares a non-heme iron and each subunit binds pheophytin, quinone, additional chlorophylls, carotenoids and lipids. D1 provides most of the ligands for the Mn4-Ca-O5 cluster of the oxygen-evolving complex (OEC). There is also a Cl(-1) ion associated with D1 and D2, which is required for oxygen evolution. The PSII complex binds additional chlorophylls, carotenoids and specific lipids. serves as cofactor. Post-translationally, tyr-160 forms a radical intermediate that is referred to as redox-active TyrZ, YZ or Y-Z. In terms of processing, C-terminally processed by CtpA; processing is essential to allow assembly of the oxygen-evolving complex and thus photosynthetic growth.

Its subcellular location is the cellular thylakoid membrane. The catalysed reaction is 2 a plastoquinone + 4 hnu + 2 H2O = 2 a plastoquinol + O2. In terms of biological role, photosystem II (PSII) is a light-driven water:plastoquinone oxidoreductase that uses light energy to abstract electrons from H(2)O, generating O(2) and a proton gradient subsequently used for ATP formation. It consists of a core antenna complex that captures photons, and an electron transfer chain that converts photonic excitation into a charge separation. The D1/D2 (PsbA/PsbD) reaction center heterodimer binds P680, the primary electron donor of PSII as well as several subsequent electron acceptors. This chain is Photosystem II protein D1, found in Prochlorococcus marinus (strain MIT 9313).